We begin with the raw amino-acid sequence, 385 residues long: Lysine 6-dehydrogenase (385 aa).

It belongs to the saccharopine dehydrogenase family. In terms of assembly, homohexamer.

It catalyses the reaction L-lysine + NAD(+) = L-1-piperideine-6-carboxylate + NH4(+) + NADH + 2 H(+). In terms of biological role, catalyzes the oxidative deamination of L-lysine in the presence of NAD. Can also use (S)-(2-aminoethyl)-L-cysteine as a substrate, but more slowly. Can use both NAD and NADP but the preferred substrate is NAD. The polypeptide is Lysine 6-dehydrogenase (lysDH) (Geobacillus stearothermophilus (Bacillus stearothermophilus)).